A 161-amino-acid chain; its full sequence is MLEPEFWVAVAFVIFCGIVWKAGGFDQIINGLDRRGERVRRELEEARRLREEAAALLADYQKRRGEAEREAEAIVANARAEAERAAAEGHARLNDFVARRTKAAEAKIAQAEAQAAAEVRAAAAEAAVRVSETILREKVTGDAAQDLIRRSLGDIRTRLRA.

A helical transmembrane segment spans residues 5-25 (EFWVAVAFVIFCGIVWKAGGF).

This sequence belongs to the ATPase B chain family. In terms of assembly, F-type ATPases have 2 components, F(1) - the catalytic core - and F(0) - the membrane proton channel. F(1) has five subunits: alpha(3), beta(3), gamma(1), delta(1), epsilon(1). F(0) has three main subunits: a(1), b(2) and c(10-14). The alpha and beta chains form an alternating ring which encloses part of the gamma chain. F(1) is attached to F(0) by a central stalk formed by the gamma and epsilon chains, while a peripheral stalk is formed by the delta and b chains.

The protein localises to the cell inner membrane. F(1)F(0) ATP synthase produces ATP from ADP in the presence of a proton or sodium gradient. F-type ATPases consist of two structural domains, F(1) containing the extramembraneous catalytic core and F(0) containing the membrane proton channel, linked together by a central stalk and a peripheral stalk. During catalysis, ATP synthesis in the catalytic domain of F(1) is coupled via a rotary mechanism of the central stalk subunits to proton translocation. Functionally, component of the F(0) channel, it forms part of the peripheral stalk, linking F(1) to F(0). This chain is ATP synthase subunit b 1, found in Methylobacterium sp. (strain 4-46).